Reading from the N-terminus, the 422-residue chain is Metallocarboxypeptidase A (422 aa).

Positions 1 to 17 are cleaved as a signal peptide; it reads MRSVLSLALLAANVVTA. The propeptide at 18 to 112 is activation peptide; sequence AVVSPFDYSG…FEAYSAGYAP (95 aa). The 301-residue stretch at 119–419 folds into the Peptidase M14 domain; sequence SYHSYQDHIS…AGTVAMLKAV (301 aa). Zn(2+) is bound by residues H179 and E182. Substrate is bound by residues 179–182, R237, and 254–255; these read HARE and NR. C248 and C271 are joined by a disulfide. Zn(2+) is bound at residue H309. 310-311 lines the substrate pocket; the sequence is SY. Residue E385 is the Proton donor/acceptor of the active site.

The protein belongs to the peptidase M14 family. Requires Zn(2+) as cofactor.

The protein localises to the secreted. Its function is as follows. Extracellular metalloprotease that contributes to pathogenicity. The sequence is that of Metallocarboxypeptidase A (MCPA) from Trichophyton equinum (Horse ringworm fungus).